We begin with the raw amino-acid sequence, 292 residues long: Ribosomal protein L11 methyltransferase (292 aa).

T143, G164, D186, and N227 together coordinate S-adenosyl-L-methionine.

It belongs to the methyltransferase superfamily. PrmA family.

Its subcellular location is the cytoplasm. The catalysed reaction is L-lysyl-[protein] + 3 S-adenosyl-L-methionine = N(6),N(6),N(6)-trimethyl-L-lysyl-[protein] + 3 S-adenosyl-L-homocysteine + 3 H(+). Its function is as follows. Methylates ribosomal protein L11. The polypeptide is Ribosomal protein L11 methyltransferase (Hahella chejuensis (strain KCTC 2396)).